The following is a 438-amino-acid chain: Transcription termination factor Rho (438 aa).

The Rho RNA-BD domain occupies 70 to 145 (YILFTGILEI…LKIEAINYLP (76 aa)). Residues 188-193 (GKGQRA), 200-205 (RTGKTE), and arginine 231 contribute to the ATP site.

This sequence belongs to the Rho family. As to quaternary structure, homohexamer. The homohexamer assembles into an open ring structure.

Facilitates transcription termination by a mechanism that involves Rho binding to the nascent RNA, activation of Rho's RNA-dependent ATPase activity, and release of the mRNA from the DNA template. The polypeptide is Transcription termination factor Rho (Helicobacter pylori (strain J99 / ATCC 700824) (Campylobacter pylori J99)).